A 569-amino-acid chain; its full sequence is Dolichol kinase EVAN (569 aa).

The Cytoplasmic portion of the chain corresponds to 1 to 22 (MKTTATSFVTGERVVVFVVVSR). A helical transmembrane segment spans residues 23–43 (ILLSLPLSLISHGFSLFLLSL). Residues 44–67 (SAFLVEIRVETSPFLLSHFSSRRG) lie on the Lumenal side of the membrane. The helical transmembrane segment at 68–88 (ASSGILLGAVTLPSVMISKLV) threads the bilayer. Residues 89–108 (QLSRAISIHEAEQDELAHVT) lie on the Cytoplasmic side of the membrane. Residues 109 to 129 (MQYWAASASCCAILIYLSVIM) traverse the membrane as a helical segment. Over 130–147 (SQVRKDESLSSSSIWLTR) the chain is Lumenal. The chain crosses the membrane as a helical span at residues 148 to 168 (VSLTGTVLYGVACFVSLSMIS). The Cytoplasmic segment spans residues 169–178 (HTGLNTSLKM). A helical membrane pass occupies residues 179 to 199 (LWMLFHGLAAVKLIRHLLCTF). Topologically, residues 200 to 207 (PSCASIGE) are lumenal. The chain crosses the membrane as a helical span at residues 208–228 (ALLVTSGLVLYFGDFLACTIA). The Cytoplasmic segment spans residues 229–252 (KIFEKLIPVDLVSISYGIKRTETG). A helical transmembrane segment spans residues 253–273 (IIVQGLLLGLLLFPMVFRFVL). Residues 274-296 (HIYESSLRKRDARQRNCSDAAKS) lie on the Lumenal side of the membrane. An N-linked (GlcNAc...) asparagine glycan is attached at Asn289. A helical membrane pass occupies residues 297-317 (VLFFVSLLFFMVVAVPSWMQF). The Cytoplasmic segment spans residues 318–340 (VHDFNQHPFLWVLTFVFSEPLKR). A helical transmembrane segment spans residues 341-361 (LSLCIYWILLIVVSVSRFYNI). Over 362–369 (SRSSKVER) the chain is Lumenal. A helical transmembrane segment spans residues 370–390 (ILLRKYYHLMAVLMFLPALVL). The Cytoplasmic portion of the chain corresponds to 391–393 (QPK). The helical transmembrane segment at 394-414 (FLDLAFGAALAVFVALEIIRI) threads the bilayer. The Lumenal portion of the chain corresponds to 415–440 (WRIQPLGEPLHQFMNAFTDHRDSEHL). The helical transmembrane segment at 441 to 461 (IVSHFSLLLGCALPIWMSSGF) threads the bilayer. Over 462 to 464 (NDR) the chain is Cytoplasmic. The chain crosses the membrane as a helical span at residues 465–485 (ALSPFAGILSLGIGDTMASMV). Over 486-508 (GHKYGVLRWSKTGKKTVEGTAAG) the chain is Lumenal. A CTP-binding region spans residues 487 to 503 (HKYGVLRWSKTGKKTVE). A helical transmembrane segment spans residues 509–529 (ITSMMAVCFVLVPILASMGYI). The Cytoplasmic portion of the chain corresponds to 530–548 (LSQGWWSLLVAVTATGMLE). The chain crosses the membrane as a helical span at residues 549–569 (AYTAQLDNAFIPLVFYSLLCL).

The protein belongs to the polyprenol kinase family.

It localises to the endoplasmic reticulum membrane. The catalysed reaction is a di-trans,poly-cis-dolichol + CTP = a di-trans,poly-cis-dolichyl phosphate + CDP + H(+). Functionally, essential for pollen development. Involved in protein N-glycosylation in the endoplasmic reticulum (ER), especially in the female gametophyte. Mediates pollen tube (PT) reception in synergids through protein glycosylation. This Arabidopsis thaliana (Mouse-ear cress) protein is Dolichol kinase EVAN.